The primary structure comprises 254 residues: Probable transcriptional regulatory protein Cyan7425_4347 (254 aa).

Belongs to the TACO1 family.

The protein resides in the cytoplasm. The sequence is that of Probable transcriptional regulatory protein Cyan7425_4347 from Cyanothece sp. (strain PCC 7425 / ATCC 29141).